The following is a 419-amino-acid chain: UDP-N-acetylglucosamine 1-carboxyvinyltransferase 2 (419 aa).

24-25 serves as a coordination point for phosphoenolpyruvate; that stretch reads KN. Residue Arg94 coordinates UDP-N-acetyl-alpha-D-glucosamine. Cys118 functions as the Proton donor in the catalytic mechanism. Cys118 bears the 2-(S-cysteinyl)pyruvic acid O-phosphothioketal mark. Residues 123–127, Asp307, and Ile329 contribute to the UDP-N-acetyl-alpha-D-glucosamine site; that span reads RPIDQ.

The protein belongs to the EPSP synthase family. MurA subfamily.

The protein localises to the cytoplasm. The catalysed reaction is phosphoenolpyruvate + UDP-N-acetyl-alpha-D-glucosamine = UDP-N-acetyl-3-O-(1-carboxyvinyl)-alpha-D-glucosamine + phosphate. Its pathway is cell wall biogenesis; peptidoglycan biosynthesis. In terms of biological role, cell wall formation. Adds enolpyruvyl to UDP-N-acetylglucosamine. The chain is UDP-N-acetylglucosamine 1-carboxyvinyltransferase 2 from Staphylococcus epidermidis (strain ATCC 12228 / FDA PCI 1200).